The sequence spans 312 residues: Zinc transporter ZitB (312 aa).

5 helical membrane-spanning segments follow: residues 21-41 (LLFA…GGIL), 48-68 (LADA…LLAV), 90-110 (AAFV…WEAI), 123-143 (LMMV…WILH), and 164-184 (LLGS…GWTP).

Belongs to the cation diffusion facilitator (CDF) transporter (TC 2.A.4) family. SLC30A subfamily.

It is found in the cell inner membrane. Functionally, involved in zinc efflux across the cytoplasmic membrane, thus reducing zinc accumulation in the cytoplasm and rendering bacteria more resistant to zinc. It may contribute to zinc homeostasis at low concentrations of zinc. The protein is Zinc transporter ZitB of Salmonella typhimurium (strain LT2 / SGSC1412 / ATCC 700720).